The primary structure comprises 333 residues: 2-oxoglutarate-dependent dioxygenase 21, chloroplastic (333 aa).

A chloroplast-targeting transit peptide spans 1-43; that stretch reads MPAVAGSLYMASQHKGVPPPLPPPPRPLPVINLGRLTMDSASR. A Fe2OG dioxygenase domain is found at 180 to 281; it reads GVQFVALNNY…RISIASIHGL (102 aa). Positions 205, 207, and 262 each coordinate Fe cation. Arg-272 contributes to the 2-oxoglutarate binding site.

It belongs to the iron/ascorbate-dependent oxidoreductase family. Fe(2+) is required as a cofactor. Requires L-ascorbate as cofactor. As to expression, expressed in roots.

It localises to the plastid. It is found in the chloroplast. The catalysed reaction is melatonin + 2-oxoglutarate + O2 = 2-hydroxymelatonin + succinate + CO2. Involved in melatonin degradation. Catalyzes the hydroxylation of melatonin to produce 2-hydroxymelatonin. The sequence is that of 2-oxoglutarate-dependent dioxygenase 21, chloroplastic from Oryza sativa subsp. japonica (Rice).